A 319-amino-acid polypeptide reads, in one-letter code: Acetyl-coenzyme A carboxylase carboxyl transferase subunit alpha (319 aa).

The CoA carboxyltransferase C-terminal domain maps to 39–293 (RLQKKSNDLT…KAVLEKQLHE (255 aa)).

Belongs to the AccA family. As to quaternary structure, acetyl-CoA carboxylase is a heterohexamer composed of biotin carboxyl carrier protein (AccB), biotin carboxylase (AccC) and two subunits each of ACCase subunit alpha (AccA) and ACCase subunit beta (AccD).

The protein resides in the cytoplasm. It carries out the reaction N(6)-carboxybiotinyl-L-lysyl-[protein] + acetyl-CoA = N(6)-biotinyl-L-lysyl-[protein] + malonyl-CoA. It functions in the pathway lipid metabolism; malonyl-CoA biosynthesis; malonyl-CoA from acetyl-CoA: step 1/1. Component of the acetyl coenzyme A carboxylase (ACC) complex. First, biotin carboxylase catalyzes the carboxylation of biotin on its carrier protein (BCCP) and then the CO(2) group is transferred by the carboxyltransferase to acetyl-CoA to form malonyl-CoA. This chain is Acetyl-coenzyme A carboxylase carboxyl transferase subunit alpha, found in Neisseria gonorrhoeae (strain ATCC 700825 / FA 1090).